The sequence spans 132 residues: Small ribosomal subunit protein uS8 (132 aa).

This sequence belongs to the universal ribosomal protein uS8 family. As to quaternary structure, part of the 30S ribosomal subunit. Contacts proteins S5 and S12.

Its function is as follows. One of the primary rRNA binding proteins, it binds directly to 16S rRNA central domain where it helps coordinate assembly of the platform of the 30S subunit. The sequence is that of Small ribosomal subunit protein uS8 from Streptococcus uberis (strain ATCC BAA-854 / 0140J).